Here is a 261-residue protein sequence, read N- to C-terminus: MKYLSAKSKLNIDAQDGGFTTTLLSYCLENGILDAVVVVGDKNWKPVAYLATTPTELLKSTKSKYSISPNNKLLEYATENYDKVGLVGLPCHILGGLQFDLTLKVGLFCTKNFYYDTIKSIIKERFGVNIDEVAKMNITKGKFVVETLKKKGFAGTEKVVYEIPIKEIEKLCNLGCRVCTDFSAKYADVSVGSVGSEDGWNTVIVRNKMVEDIINEMAEKGLIEVKETVDIKAIEKLENIKKKNEEINKCSAYFAVCPALF.

It belongs to the FrhB family.

This is an uncharacterized protein from Methanocaldococcus jannaschii (strain ATCC 43067 / DSM 2661 / JAL-1 / JCM 10045 / NBRC 100440) (Methanococcus jannaschii).